The chain runs to 342 residues: Cell cycle control protein 50C (342 aa).

At 1–33 the chain is on the cytoplasmic side; the sequence is MEMMPQYDLSRLPENTALKQQTLPTQQLNLSAS. The helical transmembrane segment at 34–54 threads the bilayer; it reads VVLSIFFITGGFCLSIGIILL. Over 55–306 the chain is Extracellular; it reads LSAKSTKKIE…STLTWIGGGG (252 aa). N-linked (GlcNAc...) asparagine glycosylation is found at asparagine 66, asparagine 80, asparagine 89, and asparagine 205. A helical membrane pass occupies residues 307–327; the sequence is LFLGLTYTVTGALTLLASFAI. Topologically, residues 328–342 are cytoplasmic; sequence LTIHLMLKRSKLNFL.

The protein belongs to the CDC50/LEM3 family. As to expression, specifically expressed in testis.

The protein localises to the membrane. This chain is Cell cycle control protein 50C (Tmem30c), found in Mus musculus (Mouse).